The chain runs to 426 residues: Glutamate-1-semialdehyde 2,1-aminomutase (426 aa).

Lys265 bears the N6-(pyridoxal phosphate)lysine mark.

The protein belongs to the class-III pyridoxal-phosphate-dependent aminotransferase family. HemL subfamily. Homodimer. Pyridoxal 5'-phosphate serves as cofactor.

The protein resides in the cytoplasm. The catalysed reaction is (S)-4-amino-5-oxopentanoate = 5-aminolevulinate. The protein operates within porphyrin-containing compound metabolism; protoporphyrin-IX biosynthesis; 5-aminolevulinate from L-glutamyl-tRNA(Glu): step 2/2. This chain is Glutamate-1-semialdehyde 2,1-aminomutase, found in Salmonella gallinarum (strain 287/91 / NCTC 13346).